The chain runs to 353 residues: Phospho-N-acetylmuramoyl-pentapeptide-transferase (353 aa).

Transmembrane regions (helical) follow at residues 16–36 (YISV…MYLM), 64–84 (AGTP…ATVL), 88–108 (LNNF…LIGI), 130–150 (LIFQ…YGHS), 160–180 (FPLF…IVGS), 198–218 (SILA…AVFA), 228–248 (IAGE…AFLW), 256–276 (VFMG…LAIV), 281–301 (ILLL…ILQV), and 330–350 (KIIV…LLSL).

It belongs to the glycosyltransferase 4 family. MraY subfamily. Mg(2+) serves as cofactor.

Its subcellular location is the cell inner membrane. It carries out the reaction UDP-N-acetyl-alpha-D-muramoyl-L-alanyl-gamma-D-glutamyl-meso-2,6-diaminopimeloyl-D-alanyl-D-alanine + di-trans,octa-cis-undecaprenyl phosphate = di-trans,octa-cis-undecaprenyl diphospho-N-acetyl-alpha-D-muramoyl-L-alanyl-D-glutamyl-meso-2,6-diaminopimeloyl-D-alanyl-D-alanine + UMP. It functions in the pathway cell wall biogenesis; peptidoglycan biosynthesis. In terms of biological role, catalyzes the initial step of the lipid cycle reactions in the biosynthesis of the cell wall peptidoglycan: transfers peptidoglycan precursor phospho-MurNAc-pentapeptide from UDP-MurNAc-pentapeptide onto the lipid carrier undecaprenyl phosphate, yielding undecaprenyl-pyrophosphoryl-MurNAc-pentapeptide, known as lipid I. The polypeptide is Phospho-N-acetylmuramoyl-pentapeptide-transferase (Aliarcobacter butzleri (strain RM4018) (Arcobacter butzleri)).